Consider the following 231-residue polypeptide: L-ribulose-5-phosphate 4-epimerase AraD (231 aa).

Substrate is bound by residues 27-28 (GN), 44-45 (SG), and 74-75 (SS). Positions 76, 95, and 97 each coordinate Zn(2+). Catalysis depends on D120, which acts as the Proton donor/acceptor. Position 171 (H171) interacts with Zn(2+). The active-site Proton donor/acceptor is Y229.

It belongs to the aldolase class II family. AraD/FucA subfamily. Homotetramer. Zn(2+) is required as a cofactor.

The catalysed reaction is L-ribulose 5-phosphate = D-xylulose 5-phosphate. It participates in carbohydrate degradation; L-arabinose degradation via L-ribulose; D-xylulose 5-phosphate from L-arabinose (bacterial route): step 3/3. With respect to regulation, inhibited by glycolohydroxamate at concentration above 0.1 mM. Involved in the degradation of L-arabinose. Catalyzes the interconversion of L-ribulose 5-phosphate (LRu5P) and D-xylulose 5-phosphate (D-Xu5P) via a retroaldol/aldol mechanism (carbon-carbon bond cleavage analogous to a class II aldolase reaction). This Escherichia coli (strain K12) protein is L-ribulose-5-phosphate 4-epimerase AraD.